The following is a 250-amino-acid chain: Entry-fusion complex associated protein OPG095 (250 aa).

A lipid anchor (N-myristoyl glycine; by host) is attached at Gly2. The targeting to MV membrane stretch occupies residues 2 to 12 (GAAASIQTTVN). Topologically, residues 2–183 (GAAASIQTTV…IAPRQVAGTG (182 aa)) are virion surface. Intrachain disulfides connect Cys34–Cys57, Cys49–Cys136, and Cys116–Cys158. A helical transmembrane segment spans residues 184 to 204 (VQFYMIVIGVIILAALFMYYA). Residues 205–250 (KRMLFTSTNDKIKLILANKENVHWTTYMDTFFRTSPMIIATTDIQN) are Intravirion-facing.

The protein belongs to the orthopoxvirus OPG095 family. As to quaternary structure, component of the entry fusion complex (EFC) composed of OPG053, OPG076, OPG086, OPG094, OPG095, OPG099, OPG107, OPG143, OPG104, OPG147 and OPG155. Except for OPG095 and OPG053, each of the EFC proteins is required for assembly or stability of the complex. Post-translationally, myristoylated. In terms of processing, disulfid bonds are oxidized in the cytoplasm by OPG088 protein. Unglycosylated because produced in viral factories instead of the classic ER -Golgi route.

Its subcellular location is the virion membrane. Functionally, component of the entry fusion complex (EFC), which consists of 11 proteins. During cell infection, this complex mediates entry of the virion core into the host cytoplasm by a two-step mechanism consisting of lipid mixing of the viral and cellular membranes and subsequent pore formation. The sequence is that of Entry-fusion complex associated protein OPG095 (OPG099) from Monkeypox virus.